A 388-amino-acid chain; its full sequence is MKLHEYQAKQLFHRYGIPIPEGRLARSVEETGQAARAFAGRCVVKAQIHAGGRGKAGGVARVNSVDQARNIAQRLLQHTLVTAQTGDQGLYVGSLLVEEIVPVAREMYLSLTLDRANGRYCLIASPDGGVDIEQTARKTPERVRRLTIDPLVGLRAFHARDIARFLGLDGPLSAAASKVILSLYRCLLEKDASLVEINPLAVTEEGRLMAMDAKVSIDDSALFRQKEMLEWLDESQLAPLEVRAAHSDIAYIKMDGCIGCLVNGAGLAMATLDMLSECGGQPANFLDVGGGADQDKVVEAFRILLEDPAVEGVLVNIFGGIMRCDLIAQGLIAAAEQVGCQLPIVVRMAGARRDEGKHLLQQTQLNISWQDGLAAAATAIVRQLSPSA.

The ATP-grasp domain occupies 9-243 (KQLFHRYGIP…ESQLAPLEVR (235 aa)). ATP is bound by residues K45, 52–54 (GRG), E98, V101, and E106. Residues N198 and D212 each coordinate Mg(2+). Residues N263 and 320 to 322 (GIM) each bind substrate.

It belongs to the succinate/malate CoA ligase beta subunit family. As to quaternary structure, heterotetramer of two alpha and two beta subunits. Mg(2+) serves as cofactor.

The enzyme catalyses succinate + ATP + CoA = succinyl-CoA + ADP + phosphate. It catalyses the reaction GTP + succinate + CoA = succinyl-CoA + GDP + phosphate. Its pathway is carbohydrate metabolism; tricarboxylic acid cycle; succinate from succinyl-CoA (ligase route): step 1/1. Its function is as follows. Succinyl-CoA synthetase functions in the citric acid cycle (TCA), coupling the hydrolysis of succinyl-CoA to the synthesis of either ATP or GTP and thus represents the only step of substrate-level phosphorylation in the TCA. The beta subunit provides nucleotide specificity of the enzyme and binds the substrate succinate, while the binding sites for coenzyme A and phosphate are found in the alpha subunit. This Syntrophotalea carbinolica (strain DSM 2380 / NBRC 103641 / GraBd1) (Pelobacter carbinolicus) protein is Succinate--CoA ligase [ADP-forming] subunit beta.